Consider the following 274-residue polypeptide: Penicillin-insensitive murein endopeptidase (274 aa).

An N-terminal signal peptide occupies residues 1–19; the sequence is MNKTAIALLALLASSASLA. 3 disulfide bridges follow: cysteine 44/cysteine 265, cysteine 187/cysteine 235, and cysteine 216/cysteine 223. Positions 110, 113, 120, 147, 150, and 211 each coordinate Zn(2+). Positions 227-274 are disordered; it reads PLPPPGDGCGAELQSWFEPPKPGTTKPEKKTPPPLPPSCQALLDEHVI.

Belongs to the peptidase M74 family. In terms of assembly, dimer. Zn(2+) is required as a cofactor.

The protein localises to the periplasm. Its function is as follows. Murein endopeptidase that cleaves the D-alanyl-meso-2,6-diamino-pimelyl amide bond that connects peptidoglycan strands. Likely plays a role in the removal of murein from the sacculus. This is Penicillin-insensitive murein endopeptidase from Escherichia coli (strain ATCC 8739 / DSM 1576 / NBRC 3972 / NCIMB 8545 / WDCM 00012 / Crooks).